The primary structure comprises 801 residues: Phenylalanine--tRNA ligase beta subunit (801 aa).

The tRNA-binding domain maps to 39–148 (AGSFTGVKVG…EDAVIGTDFR (110 aa)). One can recognise a B5 domain in the interval 401–476 (PKPNKVALRR…RIYGYDNIPN (76 aa)). Residues Asp-454, Asp-460, Glu-463, and Glu-464 each contribute to the Mg(2+) site. The region spanning 707–800 (SKFPSNRRDI…VSEKFGAALR (94 aa)) is the FDX-ACB domain.

Belongs to the phenylalanyl-tRNA synthetase beta subunit family. Type 1 subfamily. In terms of assembly, tetramer of two alpha and two beta subunits. Mg(2+) serves as cofactor.

The protein localises to the cytoplasm. The catalysed reaction is tRNA(Phe) + L-phenylalanine + ATP = L-phenylalanyl-tRNA(Phe) + AMP + diphosphate + H(+). The polypeptide is Phenylalanine--tRNA ligase beta subunit (Vibrio parahaemolyticus serotype O3:K6 (strain RIMD 2210633)).